The sequence spans 763 residues: Phosphoglycerol transferase I (763 aa).

Transmembrane regions (helical) follow at residues 1-21, 26-46, 77-97, and 108-128; these read MSEL…AWKA, WWFA…ITLF, ILPG…LGWI, and FGYS…SPAF.

The protein belongs to the OpgB family.

It localises to the cell inner membrane. The catalysed reaction is a phosphatidylglycerol + a membrane-derived-oligosaccharide D-glucose = a 1,2-diacyl-sn-glycerol + a membrane-derived-oligosaccharide 6-(glycerophospho)-D-glucose.. Its pathway is glycan metabolism; osmoregulated periplasmic glucan (OPG) biosynthesis. Its function is as follows. Transfers a phosphoglycerol residue from phosphatidylglycerol to the membrane-bound nascent glucan backbones. The sequence is that of Phosphoglycerol transferase I from Escherichia coli O6:K15:H31 (strain 536 / UPEC).